The primary structure comprises 325 residues: Dehydrogenase/reductase SDR family member 7B (325 aa).

Over 1 to 17 the chain is Cytoplasmic; that stretch reads MVSAATRKSLLRARVMD. The helical; Signal-anchor for type II membrane protein transmembrane segment at 18 to 38 threads the bilayer; it reads FITSTAILPLLLGCVGLFSLF. The Lumenal segment spans residues 39–325; the sequence is KLLQWLRMRA…ARKERKSKHS (287 aa). Residues Ser62 and Leu64 each contribute to the NAD(+) site. Ser194 is a binding site for substrate. Positions 207, 211, and 242 each coordinate NAD(+). The active-site Proton acceptor is the Tyr207.

This sequence belongs to the short-chain dehydrogenases/reductases (SDR) family.

The protein localises to the endoplasmic reticulum membrane. Putative oxidoreductase. In Bos taurus (Bovine), this protein is Dehydrogenase/reductase SDR family member 7B (DHRS7B).